Consider the following 884-residue polypeptide: DNA mismatch repair protein MutS (884 aa).

651–658 (GPNMSGKS) provides a ligand contact to ATP. The disordered stretch occupies residues 843 to 884 (LRNQGKSQPAQKNCKKEPAPNRSPDPAVGDQLSLIPAPLFPD).

This sequence belongs to the DNA mismatch repair MutS family.

Its function is as follows. This protein is involved in the repair of mismatches in DNA. It is possible that it carries out the mismatch recognition step. This protein has a weak ATPase activity. The sequence is that of DNA mismatch repair protein MutS from Synechococcus sp. (strain JA-2-3B'a(2-13)) (Cyanobacteria bacterium Yellowstone B-Prime).